Here is a 241-residue protein sequence, read N- to C-terminus: LexA repressor (241 aa).

Residues 41 to 61 (FREIGNAAGLKSPSSVKHQLQ) constitute a DNA-binding region (H-T-H motif). Active-site for autocatalytic cleavage activity residues include serine 165 and lysine 202.

Belongs to the peptidase S24 family. In terms of assembly, homodimer.

The enzyme catalyses Hydrolysis of Ala-|-Gly bond in repressor LexA.. Represses a number of genes involved in the response to DNA damage (SOS response), including recA and lexA. In the presence of single-stranded DNA, RecA interacts with LexA causing an autocatalytic cleavage which disrupts the DNA-binding part of LexA, leading to derepression of the SOS regulon and eventually DNA repair. The polypeptide is LexA repressor (Bifidobacterium longum subsp. infantis (strain ATCC 15697 / DSM 20088 / JCM 1222 / NCTC 11817 / S12)).